Reading from the N-terminus, the 164-residue chain is B-phycoerythrin alpha chain (164 aa).

2 residues coordinate (2R,3E)-phycoerythrobilin: Cys-82 and Cys-139.

This sequence belongs to the phycobiliprotein family. As to quaternary structure, heteromer of 6 alpha, 6 beta and one gamma chain. Post-translationally, contains two covalently linked bilin chromophores.

It is found in the plastid. The protein localises to the chloroplast thylakoid membrane. In terms of biological role, light-harvesting photosynthetic bile pigment-protein from the phycobiliprotein complex. In Porphyridium sordidum (Red alga), this protein is B-phycoerythrin alpha chain (cpeA).